Consider the following 289-residue polypeptide: 4-hydroxybenzoate octaprenyltransferase (289 aa).

Transmembrane regions (helical) follow at residues 23–43 (IGALLLLWPTLWALWVATPGV), 46–66 (LWILAVFVAGVWLMRAAGCVV), 99–119 (LFVVLVALSFLLVLTLNTMTI), 141–161 (LPQVVLGAAFGWSIPMAFAAV), 163–183 (ESVPLSCWLMFLANILWAVAY), 213–233 (LIIGILQIAVLALMALIGWLN), 234–254 (GLGWGYYWSVLVAGALFVYQQ), and 268–288 (AFMNNNYVGLVLFLGLAMSYV).

The protein belongs to the UbiA prenyltransferase family. It depends on Mg(2+) as a cofactor.

It is found in the cell inner membrane. The enzyme catalyses all-trans-octaprenyl diphosphate + 4-hydroxybenzoate = 4-hydroxy-3-(all-trans-octaprenyl)benzoate + diphosphate. It functions in the pathway cofactor biosynthesis; ubiquinone biosynthesis. Catalyzes the prenylation of para-hydroxybenzoate (PHB) with an all-trans polyprenyl group. Mediates the second step in the final reaction sequence of ubiquinone-8 (UQ-8) biosynthesis, which is the condensation of the polyisoprenoid side chain with PHB, generating the first membrane-bound Q intermediate 3-octaprenyl-4-hydroxybenzoate. The chain is 4-hydroxybenzoate octaprenyltransferase from Citrobacter koseri (strain ATCC BAA-895 / CDC 4225-83 / SGSC4696).